The sequence spans 1170 residues: Chromosome partition protein Smc (1170 aa).

32–39 (PNGCGKSN) serves as a coordination point for ATP. Coiled coils occupy residues 169–215 (GVSK…AVVA), 245–365 (DRQR…DAAA), and 401–508 (EAAH…TQGK). Residues 520-623 (ALPRLWKKLH…VADDLAQALA (104 aa)) form the SMC hinge domain. Coiled-coil stretches lie at residues 664-944 (QEIE…KEKL) and 983-1020 (ERKV…LQAT).

This sequence belongs to the SMC family. In terms of assembly, homodimer.

It localises to the cytoplasm. In terms of biological role, required for chromosome condensation and partitioning. The protein is Chromosome partition protein Smc of Burkholderia pseudomallei (strain 1710b).